We begin with the raw amino-acid sequence, 99 residues long: MALTLTDVKRIAHLARLEMADADAERTLTQLNEFFGLVEQMQAVDTTGIAPLAHPIEQILEVAQRLRDDVVTEHVNRDDNQRPAPAVQDGLYLVPKVIE.

This sequence belongs to the GatC family. In terms of assembly, heterotrimer of A, B and C subunits.

The enzyme catalyses L-glutamyl-tRNA(Gln) + L-glutamine + ATP + H2O = L-glutaminyl-tRNA(Gln) + L-glutamate + ADP + phosphate + H(+). It catalyses the reaction L-aspartyl-tRNA(Asn) + L-glutamine + ATP + H2O = L-asparaginyl-tRNA(Asn) + L-glutamate + ADP + phosphate + 2 H(+). Its function is as follows. Allows the formation of correctly charged Asn-tRNA(Asn) or Gln-tRNA(Gln) through the transamidation of misacylated Asp-tRNA(Asn) or Glu-tRNA(Gln) in organisms which lack either or both of asparaginyl-tRNA or glutaminyl-tRNA synthetases. The reaction takes place in the presence of glutamine and ATP through an activated phospho-Asp-tRNA(Asn) or phospho-Glu-tRNA(Gln). This is Aspartyl/glutamyl-tRNA(Asn/Gln) amidotransferase subunit C from Burkholderia thailandensis (strain ATCC 700388 / DSM 13276 / CCUG 48851 / CIP 106301 / E264).